The following is a 100-amino-acid chain: UPF0213 protein YhbQ (100 aa).

The region spanning 2–77 is the GIY-YIG domain; the sequence is TPWFLYLIRT…KQLTKRQKER (76 aa).

This sequence belongs to the UPF0213 family.

The chain is UPF0213 protein YhbQ from Shigella dysenteriae serotype 1 (strain Sd197).